Consider the following 412-residue polypeptide: L-cysteine:1D-myo-inositol 2-amino-2-deoxy-alpha-D-glucopyranoside ligase (412 aa).

C44 is a binding site for Zn(2+). L-cysteinyl-5'-AMP-binding positions include 44-47 (CGIT), T59, and 82-84 (NVT). Positions 46-56 (ITPYDATHLGH) match the 'HIGH' region motif. The 'ERGGDP' region motif lies at 187–192 (QSGGDP). Position 227 (W227) interacts with L-cysteinyl-5'-AMP. C231 contacts Zn(2+). 249-251 (GSD) contacts L-cysteinyl-5'-AMP. A Zn(2+)-binding site is contributed by H256. I283 lines the L-cysteinyl-5'-AMP pocket. Positions 289-293 (KMSKS) match the 'KMSKS' region motif.

This sequence belongs to the class-I aminoacyl-tRNA synthetase family. MshC subfamily. As to quaternary structure, monomer. Zn(2+) is required as a cofactor.

It catalyses the reaction 1D-myo-inositol 2-amino-2-deoxy-alpha-D-glucopyranoside + L-cysteine + ATP = 1D-myo-inositol 2-(L-cysteinylamino)-2-deoxy-alpha-D-glucopyranoside + AMP + diphosphate + H(+). In terms of biological role, catalyzes the ATP-dependent condensation of GlcN-Ins and L-cysteine to form L-Cys-GlcN-Ins. The sequence is that of L-cysteine:1D-myo-inositol 2-amino-2-deoxy-alpha-D-glucopyranoside ligase (mshC) from Mycobacterium leprae (strain TN).